Consider the following 389-residue polypeptide: tRNA-specific 2-thiouridylase MnmA (389 aa).

Residues 35–42 (GMSGGVDS) and methionine 61 each bind ATP. Residues 121–123 (NPD) form an interaction with target base in tRNA region. Cysteine 126 serves as the catalytic Nucleophile. A disulfide bridge connects residues cysteine 126 and cysteine 223. Residue glycine 151 participates in ATP binding. The interaction with tRNA stretch occupies residues 173-175 (KDQ). Residue cysteine 223 is the Cysteine persulfide intermediate of the active site. The interaction with tRNA stretch occupies residues 335–336 (RY).

This sequence belongs to the MnmA/TRMU family.

It localises to the cytoplasm. The catalysed reaction is S-sulfanyl-L-cysteinyl-[protein] + uridine(34) in tRNA + AH2 + ATP = 2-thiouridine(34) in tRNA + L-cysteinyl-[protein] + A + AMP + diphosphate + H(+). Its function is as follows. Catalyzes the 2-thiolation of uridine at the wobble position (U34) of tRNA, leading to the formation of s(2)U34. The sequence is that of tRNA-specific 2-thiouridylase MnmA from Actinobacillus succinogenes (strain ATCC 55618 / DSM 22257 / CCUG 43843 / 130Z).